Reading from the N-terminus, the 83-residue chain is Small ribosomal subunit protein bS16 (83 aa).

It belongs to the bacterial ribosomal protein bS16 family.

In Magnetococcus marinus (strain ATCC BAA-1437 / JCM 17883 / MC-1), this protein is Small ribosomal subunit protein bS16.